Reading from the N-terminus, the 196-residue chain is Heat shock protein beta-8 (196 aa).

The disordered stretch occupies residues 1–34; it reads MADGQMPFPCHYTSRRRRDPFRDSPLSSRLLDDG. Over residues 23-34 the composition is skewed to low complexity; that stretch reads DSPLSSRLLDDG. 2 positions are modified to phosphoserine: S24 and S57. The residue at position 63 (T63) is a Phosphothreonine. Asymmetric dimethylarginine is present on residues R71 and R78. The region spanning 74–185 is the sHSP domain; that stretch reads TAMTRFGVPA…PFGESSFNNE (112 aa). The residue at position 87 (S87) is a Phosphoserine. The disordered stretch occupies residues 176-196; that stretch reads PFGESSFNNELPQDGQEVTCT. Positions 178-196 are enriched in polar residues; that stretch reads GESSFNNELPQDGQEVTCT.

It belongs to the small heat shock protein (HSP20) family. In terms of assembly, monomer. Forms a ternary complex with BAG3 and HSPA1A. Component of the chaperone-assisted selective autophagy (CASA) complex consisting of BAG3, HSPA8/HSC70, HSPB8 and STUB1/CHIP. Interacts with HSPB1. Interacts with DNAJB6. Interacts with BAG3. In terms of processing, phosphorylated.

It is found in the cytoplasm. It localises to the nucleus. Its function is as follows. Involved in the chaperone-assisted selective autophagy (CASA), a crucial process for protein quality control, particularly in mechanical strained cells and tissues such as muscle. Displays temperature-dependent chaperone activity. This is Heat shock protein beta-8 (HSPB8) from Bos taurus (Bovine).